A 989-amino-acid chain; its full sequence is Cation-chloride cotransporter 1 (989 aa).

Positions 1-10 (MENGEIEGAA) are enriched in acidic residues. A disordered region spans residues 1-29 (MENGEIEGAADDGVPVPAPPNGRRYRPVG). The Cytoplasmic segment spans residues 1-132 (MENGEIEGAA…GRPKETGPKF (132 aa)). Residues 133–153 (GTMMGVFVPCLQNILGIIYYI) form a helical membrane-spanning segment. Topologically, residues 154–167 (RFTWIVGMAGVWQS) are extracellular. A helical membrane pass occupies residues 168-188 (LVLVSFCGACTFLTGISLSAI). Residues 189–214 (ATNGAMKGGGPYYLIGRALGPEVGVS) lie on the Cytoplasmic side of the membrane. A helical transmembrane segment spans residues 215–235 (IGLCFFLGNAVAGSMYVLGAV). The Extracellular segment spans residues 236-280 (ETFLDAVPSAGFFKESVTVVNNTLVNGTATASTATISTPSLHDLQ). N-linked (GlcNAc...) asparagine glycans are attached at residues Asn256 and Asn261. The helical transmembrane segment at 281 to 301 (VYGVIVTILLCFIVFGGVKII) threads the bilayer. Topologically, residues 302–304 (NKV) are cytoplasmic. The helical transmembrane segment at 305–325 (APAFLIPVLFSLLCIYLGVFI) threads the bilayer. Topologically, residues 326-365 (APRHNAPKGITGLSITTFKDNWGSEYQRTNNAGVPDPNGS) are extracellular. A glycan (N-linked (GlcNAc...) asparagine) is linked at Asn363. Residues 366–386 (IYWDFNALVGLFFPAVTGIMA) form a helical membrane-spanning segment. Residues 387-405 (GSNRSASLKDTQRSIPIGT) lie on the Cytoplasmic side of the membrane. Residues 406 to 426 (LSATLTTTAMYLFSVLLFGAL) traverse the membrane as a helical segment. The Extracellular segment spans residues 427–441 (ATREELLTDRLLTAT). Residues 442–462 (VAWPAPAVIYIGIILSTLGAA) form a helical membrane-spanning segment. Over 463 to 498 (LQSLTGAPRLLAAIANDDILPVLNYFKVSEGAEPHS) the chain is Cytoplasmic. A helical membrane pass occupies residues 499 to 519 (ATLFTAFICICCVVIGNLDLI). The Extracellular segment spans residues 520 to 522 (TPT). Residues 523–543 (ITMFFLLCYAGVNLSCFLLDL) traverse the membrane as a helical segment. The Cytoplasmic segment spans residues 544 to 551 (LDAPSWRP). Residues 552-572 (RWKFHHWSLSLVGALLCVVIM) traverse the membrane as a helical segment. The Extracellular portion of the chain corresponds to 573 to 578 (FLISWS). Residues 579–599 (FTVVSLALASLIYYYVSLKGK) form a helical membrane-spanning segment. Topologically, residues 600-989 (AGDWGDGFKS…YRRDVVTFFT (390 aa)) are cytoplasmic.

This sequence belongs to the SLC12A transporter family. As to expression, expressed in roots, stems and leaves with higher expression in root and leaf tips.

Its subcellular location is the membrane. Functionally, probable cation/chloride cotransporter that may mediate potassium-chloride cotransport. Involved in plant development and K(+) and Cl(-) homeostasis. May not be involved in sodium-chloride cotransport. The sequence is that of Cation-chloride cotransporter 1 (CCC1) from Oryza sativa subsp. japonica (Rice).